We begin with the raw amino-acid sequence, 150 residues long: MEDMDTTITLIGTRLAKEGVEFFFDGDTPECEQCKLKNTCMSLEKGKKYRVVKVRNNTLHECFVHDKGAMVVDVVKAPIFALLDSKKAIEGSKIRYQAPKCDEKLDAETYELCYPKGLRNGERCTVLKVMGTVEMEADPSITLKKVELLP.

This sequence belongs to the UPF0179 family.

The polypeptide is UPF0179 protein Mbur_1033 (Methanococcoides burtonii (strain DSM 6242 / NBRC 107633 / OCM 468 / ACE-M)).